Consider the following 1043-residue polypeptide: tRNA wybutosine-synthesizing protein 2/3/4 (1043 aa).

Residues 1-233 (MEFDRRKAAA…PVLQNGAKHG (233 aa)) are tRNA wybutosine-synthesizing protein 3 homolog. The segment at 53–75 (RVSVLAQPPPPQQADPGGAKTKK) is disordered. 4 Kelch repeats span residues 360 to 410 (DIYV…AVDR), 412 to 460 (VYVF…SYGS), 461 to 510 (KLFL…IYKD), and 512 to 559 (LGIL…VIID). Residues 700 to 1041 (QPDDSCVFEE…RHLVVDVKCR (342 aa)) form a tRNA wybutosine-synthesizing protein 2 homolog region. Residues Lys-874 and 942–943 (DN) contribute to the S-adenosyl-L-methionine site.

This sequence in the C-terminal section; belongs to the class I-like SAM-binding methyltransferase superfamily. TRM5/TYW2 family. In the N-terminal section; belongs to the TYW3 family.

It carries out the reaction 4-demethyl-7-[(3S)-3-amino-3-carboxypropyl]wyosine(37) in tRNA(Phe) + S-adenosyl-L-methionine = 7-[(3S)-3-amino-3-carboxypropyl]wyosine(37) in tRNA(Phe) + S-adenosyl-L-homocysteine + H(+). The enzyme catalyses 4-demethylwyosine(37) in tRNA(Phe) + S-adenosyl-L-methionine = 4-demethyl-7-[(3S)-3-amino-3-carboxypropyl]wyosine(37) in tRNA(Phe) + S-methyl-5'-thioadenosine + H(+). Its pathway is tRNA modification; wybutosine-tRNA(Phe) biosynthesis. S-adenosyl-L-methionine-dependent transferase that acts as a component of the wybutosine biosynthesis pathway. Wybutosine is a hyper modified guanosine with a tricyclic base found at the 3'-position adjacent to the anticodon of eukaryotic phenylalanine tRNA. The chain is tRNA wybutosine-synthesizing protein 2/3/4 from Oryza sativa subsp. japonica (Rice).